Here is a 133-residue protein sequence, read N- to C-terminus: MWLYTFAVALIVIAQEINGEPHTRPSSATPLNATLPPQEEGSAQNTTDAAVGSRLSTILRDLPTIKNISIFICVLTTLLITCLVIKICRSARKIRKTRKYDIITTPAERVEMAPLNEENDEEDDSTLFDVKYR.

Positions 1–19 (MWLYTFAVALIVIAQEING) are cleaved as a signal peptide. Topologically, residues 20–67 (EPHTRPSSATPLNATLPPQEEGSAQNTTDAAVGSRLSTILRDLPTIKN) are extracellular. The tract at residues 22-47 (HTRPSSATPLNATLPPQEEGSAQNTT) is disordered. Residues asparagine 32, asparagine 45, and asparagine 67 are each glycosylated (N-linked (GlcNAc...) asparagine). A helical transmembrane segment spans residues 68–88 (ISIFICVLTTLLITCLVIKIC). Residues 89–133 (RSARKIRKTRKYDIITTPAERVEMAPLNEENDEEDDSTLFDVKYR) are Cytoplasmic-facing. The disordered stretch occupies residues 113 to 133 (APLNEENDEEDDSTLFDVKYR). Residues 117–126 (EENDEEDDST) show a composition bias toward acidic residues.

This sequence belongs to the FAM174 family.

It is found in the cell membrane. Its subcellular location is the golgi apparatus. Its function is as follows. Essential for Golgi structural integrity. This is Membrane protein FAM174B (Fam174b) from Danio rerio (Zebrafish).